The sequence spans 75 residues: U6-lycotoxin-Ls1d (75 aa).

An N-terminal signal peptide occupies residues Met1–Ala21. The propeptide occupies Glu22 to Arg25.

This sequence belongs to the neurotoxin 19 (CSTX) family. 06 (U6-Lctx) subfamily. Contains 4 disulfide bonds. In terms of tissue distribution, expressed by the venom gland.

The protein localises to the secreted. This Lycosa singoriensis (Wolf spider) protein is U6-lycotoxin-Ls1d.